A 393-amino-acid polypeptide reads, in one-letter code: Chorismate synthase (393 aa).

NADP(+)-binding residues include arginine 40 and arginine 46. FMN-binding positions include 129–131, 249–250, glycine 301, 316–320, and arginine 342; these read RSS, QA, and KPIPT.

This sequence belongs to the chorismate synthase family. In terms of assembly, homotetramer. It depends on FMNH2 as a cofactor.

The enzyme catalyses 5-O-(1-carboxyvinyl)-3-phosphoshikimate = chorismate + phosphate. It functions in the pathway metabolic intermediate biosynthesis; chorismate biosynthesis; chorismate from D-erythrose 4-phosphate and phosphoenolpyruvate: step 7/7. Functionally, catalyzes the anti-1,4-elimination of the C-3 phosphate and the C-6 proR hydrogen from 5-enolpyruvylshikimate-3-phosphate (EPSP) to yield chorismate, which is the branch point compound that serves as the starting substrate for the three terminal pathways of aromatic amino acid biosynthesis. This reaction introduces a second double bond into the aromatic ring system. This chain is Chorismate synthase, found in Geotalea uraniireducens (strain Rf4) (Geobacter uraniireducens).